A 654-amino-acid chain; its full sequence is Insulin receptor substrate 1 (654 aa).

One can recognise a PH domain in the interval 3-107 (DIKKCGYLRK…WYQAILEVQA (105 aa)). The residue at position 36 (Tyr36) is a Phosphotyrosine. The IRS-type PTB domain occupies 126 to 230 (FREVWQVSVR…EAMKSLSEEF (105 aa)). The segment at 228–329 (EEFRPRTKSQ…EYGSSPGVLE (102 aa)) is disordered. Residues 235–245 (KSQSLSSTPIS) are compositionally biased toward polar residues. Ser276 bears the Phosphoserine mark. The segment covering 307–321 (NESSADYGSASSDEY) has biased composition (polar residues). Tyr345 is modified (phosphotyrosine; by INSR). 6 short sequence motifs (YXXM motif) span residues 345 to 348 (YISM), 384 to 387 (YAMM), 398 to 401 (YMPM), 411 to 414 (YMPM), 430 to 433 (YVMM), and 466 to 469 (YMNM). Residues Tyr398 and Tyr411 each carry the phosphotyrosine; by INSR modification. Phosphotyrosine is present on Tyr430. Disordered regions lie at residues 473-494 (SRSA…GGPC) and 507-532 (YKME…VNAG). Residues 514-524 (SARASCSSSSD) are compositionally biased toward low complexity. A Phosphotyrosine; by INSR modification is found at Tyr563.

As to quaternary structure, interacts with the NPXY motif of tyrosine-phosphorylated igf1r and insr via the PTB domain. Binds to phosphatidylinositol 3-kinase p85 subunit via the phosphorylated YXXM motifs.

Its function is as follows. May mediate the control of various cellular processes by insulin. When phosphorylated by the insulin receptor binds specifically to various cellular proteins containing SH2 domains such as phosphatidylinositol 3-kinase p85 subunit or grb2. Activates phosphatidylinositol 3-kinase when bound to the regulatory p85 subunit. In Xenopus tropicalis (Western clawed frog), this protein is Insulin receptor substrate 1.